Here is a 119-residue protein sequence, read N- to C-terminus: Beta-2-microglobulin (119 aa).

The first 20 residues, 1-20, serve as a signal peptide directing secretion; that stretch reads MGRFVAVALLVLLSLSGLET. In terms of domain architecture, Ig-like C1-type spans 25–114; the sequence is PKIQVYSRHP…VTFSTPKTVK (90 aa). Residues cysteine 45 and cysteine 100 are joined by a disulfide bond.

The protein belongs to the beta-2-microglobulin family. Heterodimer of an alpha chain and a beta chain. Beta-2-microglobulin is the beta-chain of major histocompatibility complex class I molecules.

It is found in the secreted. Component of the class I major histocompatibility complex (MHC). Involved in the presentation of peptide antigens to the immune system. This is Beta-2-microglobulin (B2M) from Callicebus personatus nigrifrons (Black-fronted titi).